The sequence spans 279 residues: MNNEEQKLIENLFSRLYKAESDFPNRDKNAEQLINDLLRKQPSSSYYMTQTILVQEMIIEKLNAKILELEKNLSMNEKQTKHGSFGFLSGLFKSKKKEIDACNQGNKAGNHKDDISKRPIMDCLNNNVGKTTSVLGRETIYNTSNNSMSGFLSGSLQTAAGVAGGMVMANLLMNLFQHKRPEEEMIDQISHNPTPVSADSDDLVNNNMNNDKHDVASSDYINDEHEYGEHVKNDHQLHDSPLCSDVSDSTSNNNYDESLNFSNDNNNSSFNDFDDDNFI.

Residues 233–279 form a disordered region; that stretch reads NDHQLHDSPLCSDVSDSTSNNNYDESLNFSNDNNNSSFNDFDDDNFI. Positions 246–259 are enriched in polar residues; it reads VSDSTSNNNYDESL. Over residues 260-271 the composition is skewed to low complexity; the sequence is NFSNDNNNSSFN.

This is an uncharacterized protein from Buchnera aphidicola subsp. Baizongia pistaciae (strain Bp).